A 53-amino-acid chain; its full sequence is Sec-independent protein translocase protein TatA (53 aa).

A helical transmembrane segment spans residues Met1 to Ala21.

The protein belongs to the TatA/E family. The Tat system comprises two distinct complexes: a TatABC complex, containing multiple copies of TatA, TatB and TatC subunits, and a separate TatA complex, containing only TatA subunits. Substrates initially bind to the TatABC complex, which probably triggers association of the separate TatA complex to form the active translocon.

Its subcellular location is the cell inner membrane. In terms of biological role, part of the twin-arginine translocation (Tat) system that transports large folded proteins containing a characteristic twin-arginine motif in their signal peptide across membranes. TatA could form the protein-conducting channel of the Tat system. In Rickettsia africae (strain ESF-5), this protein is Sec-independent protein translocase protein TatA.